Here is a 565-residue protein sequence, read N- to C-terminus: Oxygen-dependent choline dehydrogenase (565 aa).

Residue 7–36 coordinates FAD; that stretch reads DYIICGAGSAGNVLATRLTEDPGVTVLLLE. Residue H474 is the Proton acceptor of the active site.

The protein belongs to the GMC oxidoreductase family. It depends on FAD as a cofactor.

It catalyses the reaction choline + A = betaine aldehyde + AH2. The catalysed reaction is betaine aldehyde + NAD(+) + H2O = glycine betaine + NADH + 2 H(+). It functions in the pathway amine and polyamine biosynthesis; betaine biosynthesis via choline pathway; betaine aldehyde from choline (cytochrome c reductase route): step 1/1. Involved in the biosynthesis of the osmoprotectant glycine betaine. Catalyzes the oxidation of choline to betaine aldehyde and betaine aldehyde to glycine betaine at the same rate. The sequence is that of Oxygen-dependent choline dehydrogenase from Burkholderia pseudomallei (strain 1710b).